The chain runs to 456 residues: Bifunctional protein GlmU (456 aa).

A pyrophosphorylase region spans residues 1 to 229 (MLNNAMSVVI…LSEVEGVNNR (229 aa)). UDP-N-acetyl-alpha-D-glucosamine contacts are provided by residues 11–14 (LAAG), K25, Q76, 81–82 (GT), 103–105 (YGD), G140, E154, N169, and N227. D105 is a Mg(2+) binding site. Residue N227 participates in Mg(2+) binding. The linker stretch occupies residues 230-250 (LQLSRLERVYQSEQAEKLLLA). The N-acetyltransferase stretch occupies residues 251-456 (GVMLRDPARF…EGWRRPVKKK (206 aa)). Residues R333 and K351 each contribute to the UDP-N-acetyl-alpha-D-glucosamine site. H363 acts as the Proton acceptor in catalysis. Residues Y366 and N377 each contribute to the UDP-N-acetyl-alpha-D-glucosamine site. Residues A380, 386–387 (NY), S405, A423, and R440 each bind acetyl-CoA.

The protein in the N-terminal section; belongs to the N-acetylglucosamine-1-phosphate uridyltransferase family. It in the C-terminal section; belongs to the transferase hexapeptide repeat family. In terms of assembly, homotrimer. Mg(2+) is required as a cofactor.

It is found in the cytoplasm. It carries out the reaction alpha-D-glucosamine 1-phosphate + acetyl-CoA = N-acetyl-alpha-D-glucosamine 1-phosphate + CoA + H(+). The catalysed reaction is N-acetyl-alpha-D-glucosamine 1-phosphate + UTP + H(+) = UDP-N-acetyl-alpha-D-glucosamine + diphosphate. The protein operates within nucleotide-sugar biosynthesis; UDP-N-acetyl-alpha-D-glucosamine biosynthesis; N-acetyl-alpha-D-glucosamine 1-phosphate from alpha-D-glucosamine 6-phosphate (route II): step 2/2. Its pathway is nucleotide-sugar biosynthesis; UDP-N-acetyl-alpha-D-glucosamine biosynthesis; UDP-N-acetyl-alpha-D-glucosamine from N-acetyl-alpha-D-glucosamine 1-phosphate: step 1/1. It participates in bacterial outer membrane biogenesis; LPS lipid A biosynthesis. Catalyzes the last two sequential reactions in the de novo biosynthetic pathway for UDP-N-acetylglucosamine (UDP-GlcNAc). The C-terminal domain catalyzes the transfer of acetyl group from acetyl coenzyme A to glucosamine-1-phosphate (GlcN-1-P) to produce N-acetylglucosamine-1-phosphate (GlcNAc-1-P), which is converted into UDP-GlcNAc by the transfer of uridine 5-monophosphate (from uridine 5-triphosphate), a reaction catalyzed by the N-terminal domain. In Shigella boydii serotype 4 (strain Sb227), this protein is Bifunctional protein GlmU.